Consider the following 748-residue polypeptide: Transducin-like enhancer protein 4 (748 aa).

Disordered stretches follow at residues 1 to 20 (MIRD…PHQP) and 157 to 332 (LPIK…DPLA). A q domain region spans residues 1–112 (MIRDLSKMYR…SQEQQQLQAQ (112 aa)). A GP domain region spans residues 113 to 179 (HLLTWTWSAC…HQRDRDSIKS (67 aa)). Residues 158 to 177 (PIKDEKKHHDNDHQRDRDSI) show a composition bias toward basic and acidic residues. Over residues 178-189 (KSSSVSPSASFR) the composition is skewed to low complexity. A ccN domain region spans residues 180–249 (SSVSPSASFR…SPRGSPAHSP (70 aa)). 4 positions are modified to phosphoserine: serine 183, serine 187, serine 191, and serine 197. The span at 190 to 227 (GSEKHRNSTDYSSESKKQKTEEKEIAARYDSDGEKSDD) shows a compositional bias: basic and acidic residues. Lysine 212 carries the post-translational modification N6-acetyllysine. Phosphoserine is present on serine 220. Serine 225 is modified (phosphoserine; by CK2). Phosphoserine; by CDK1 is present on serine 240. Residues serine 244 and serine 248 each carry the phosphoserine modification. Over residues 248–264 (SPRENGLDKTRLLKKDA) the composition is skewed to basic and acidic residues. The tract at residues 250-427 (RENGLDKTRL…PGGKPAYSFH (178 aa)) is SP domain. The residue at position 256 (lysine 256) is an N6-acetyllysine. Low complexity predominate over residues 265–280 (PISPASVASSSSTPSS). A Phosphoserine modification is found at serine 267. Over residues 292-303 (TTPVSKSNTPTP) the composition is skewed to polar residues. Phosphothreonine is present on threonine 293. Serine 296 and serine 298 each carry phosphoserine. Residues threonine 300, threonine 302, threonine 309, and threonine 315 each carry the phosphothreonine modification. Phosphoserine is present on serine 394. 7 WD repeats span residues 460 to 498 (NHGE…NKSP), 506 to 545 (NRDN…PRIK), 550 to 589 (SSAP…LVRQ), 592 to 631 (GHTD…QLQQ), 633 to 672 (DFTS…KYQL), 674 to 713 (LHES…SIFQ), and 715 to 748 (KESS…EVIY).

Belongs to the WD repeat Groucho/TLE family. Homooligomer and heterooligomer with other family members. Binds PAX5, LEF1, TCF7, TCF7L1 and TCF7L2. Interacts with ZNF703; TLE4 may mediate ZNF703 transcriptional repression. Interacts with SIX3 and SIX6. Interacts with PAX2. In terms of processing, phosphorylated. PAX5 binding increases phosphorylation. Ubiquitinated by XIAP/BIRC4.

The protein resides in the nucleus. Transcriptional corepressor that binds to a number of transcription factors. Inhibits the transcriptional activation mediated by PAX5, and by CTNNB1 and TCF family members in Wnt signaling. The effects of full-length TLE family members may be modulated by association with dominant-negative AES. Essential for the transcriptional repressor activity of SIX3 during retina and lens development and for SIX3 transcriptional auto-repression. Involved in transcriptional repression of GNRHR and enhances MSX1-mediated transcriptional repression of CGA/alpha-GSU. In Rattus norvegicus (Rat), this protein is Transducin-like enhancer protein 4 (Tle4).